A 179-amino-acid polypeptide reads, in one-letter code: Ubiquitin-conjugating enzyme E2 C (179 aa).

Polar residues predominate over residues methionine 1 to threonine 14. Residues methionine 1 to valine 31 are disordered. Alanine 2 bears the N-acetylalanine mark. Serine 3 is modified (phosphoserine). The 146-residue stretch at proline 30–threonine 175 folds into the UBC core domain. The Glycyl thioester intermediate role is filled by cysteine 114.

This sequence belongs to the ubiquitin-conjugating enzyme family. In terms of assembly, component of the APC/C complex, composed of at least 14 distinct subunits that assemble into a complex of at least 19 chains with a combined molecular mass of around 1.2 MDa. Within this complex, directly interacts with ANAPC2. In terms of processing, autoubiquitinated by the APC/C complex, leading to its degradation by the proteasome. Its degradation plays a central role in APC/C regulation, allowing cyclin-A accumulation before S phase entry. APC/C substrates inhibit the autoubiquitination of UBE2C/UBCH10 but not its E2 function, hence APC/C remaining active until its substrates have been destroyed.

It carries out the reaction S-ubiquitinyl-[E1 ubiquitin-activating enzyme]-L-cysteine + [E2 ubiquitin-conjugating enzyme]-L-cysteine = [E1 ubiquitin-activating enzyme]-L-cysteine + S-ubiquitinyl-[E2 ubiquitin-conjugating enzyme]-L-cysteine.. The catalysed reaction is S-ubiquitinyl-[E1 ubiquitin-activating enzyme]-L-cysteine + [acceptor protein]-L-lysine = [E1 ubiquitin-activating enzyme]-L-cysteine + N(6)-monoubiquitinyl-[acceptor protein]-L-lysine.. It functions in the pathway protein modification; protein ubiquitination. Its function is as follows. Accepts ubiquitin from the E1 complex and catalyzes its covalent attachment to other proteins. In vitro catalyzes 'Lys-11'- and 'Lys-48'-linked polyubiquitination. Acts as an essential factor of the anaphase promoting complex/cyclosome (APC/C), a cell cycle-regulated ubiquitin ligase that controls progression through mitosis. Acts by initiating 'Lys-11'-linked polyubiquitin chains on APC/C substrates, leading to the degradation of APC/C substrates by the proteasome and promoting mitotic exit. The polypeptide is Ubiquitin-conjugating enzyme E2 C (UBE2C) (Macaca fascicularis (Crab-eating macaque)).